The following is a 275-amino-acid chain: Ribosomal RNA small subunit methyltransferase A (275 aa).

6 residues coordinate S-adenosyl-L-methionine: asparagine 19, leucine 21, glycine 46, glutamate 71, aspartate 94, and asparagine 117.

Belongs to the class I-like SAM-binding methyltransferase superfamily. rRNA adenine N(6)-methyltransferase family. RsmA subfamily.

Its subcellular location is the cytoplasm. It catalyses the reaction adenosine(1518)/adenosine(1519) in 16S rRNA + 4 S-adenosyl-L-methionine = N(6)-dimethyladenosine(1518)/N(6)-dimethyladenosine(1519) in 16S rRNA + 4 S-adenosyl-L-homocysteine + 4 H(+). Specifically dimethylates two adjacent adenosines (A1518 and A1519) in the loop of a conserved hairpin near the 3'-end of 16S rRNA in the 30S particle. May play a critical role in biogenesis of 30S subunits. The sequence is that of Ribosomal RNA small subunit methyltransferase A from Burkholderia orbicola (strain MC0-3).